A 284-amino-acid polypeptide reads, in one-letter code: 2-dehydro-3-deoxyphosphooctonate aldolase (284 aa).

The protein belongs to the KdsA family.

The protein localises to the cytoplasm. The enzyme catalyses D-arabinose 5-phosphate + phosphoenolpyruvate + H2O = 3-deoxy-alpha-D-manno-2-octulosonate-8-phosphate + phosphate. It functions in the pathway carbohydrate biosynthesis; 3-deoxy-D-manno-octulosonate biosynthesis; 3-deoxy-D-manno-octulosonate from D-ribulose 5-phosphate: step 2/3. It participates in bacterial outer membrane biogenesis; lipopolysaccharide biosynthesis. This chain is 2-dehydro-3-deoxyphosphooctonate aldolase, found in Burkholderia orbicola (strain MC0-3).